Consider the following 370-residue polypeptide: 3-isopropylmalate dehydrogenase (370 aa).

Gly77–Glu90 contacts NAD(+). Substrate-binding residues include Arg97, Arg107, Arg135, and Asp226. The Mg(2+) site is built by Asp226, Asp250, and Asp254. Gly290–Asn302 provides a ligand contact to NAD(+).

It belongs to the isocitrate and isopropylmalate dehydrogenases family. LeuB type 1 subfamily. As to quaternary structure, homodimer. Requires Mg(2+) as cofactor. Mn(2+) serves as cofactor.

The protein localises to the cytoplasm. It carries out the reaction (2R,3S)-3-isopropylmalate + NAD(+) = 4-methyl-2-oxopentanoate + CO2 + NADH. Its pathway is amino-acid biosynthesis; L-leucine biosynthesis; L-leucine from 3-methyl-2-oxobutanoate: step 3/4. In terms of biological role, catalyzes the oxidation of 3-carboxy-2-hydroxy-4-methylpentanoate (3-isopropylmalate) to 3-carboxy-4-methyl-2-oxopentanoate. The product decarboxylates to 4-methyl-2 oxopentanoate. The chain is 3-isopropylmalate dehydrogenase (leuB) from Agrobacterium fabrum (strain C58 / ATCC 33970) (Agrobacterium tumefaciens (strain C58)).